A 238-amino-acid chain; its full sequence is MAADGQCSLPASWRPVTLTHVEYPAGDLSGHLLAYLSLSPVFVIVGFVTLIIFKRELHTISFLGGLALNEGVNWLIKNVIQEPRPCGGPHTAVGTKYGMPSSHSQFMWFFSVYSFLFLYLRMHQTNNARFLDLLWRHVLSLGLLAVAFLVSYSRVYLLYHTWSQVLYGGIAGGLMAIAWFIFTQEVLTPLFPRIAAWPVSEFFLIRDTSLIPNVLWFEYTVTRAEARNRQRKLGTKLQ.

The next 4 membrane-spanning stretches (helical) occupy residues 33 to 53 (LAYLSLSPVFVIVGFVTLIIF), 100 to 120 (PSSHSQFMWFFSVYSFLFLYL), 130 to 150 (FLDLLWRHVLSLGLLAVAFLV), and 162 to 182 (WSQVLYGGIAGGLMAIAWFIF).

Belongs to the dolichyldiphosphatase family.

It is found in the endoplasmic reticulum membrane. The catalysed reaction is a di-trans,poly-cis-dolichyl diphosphate + H2O = a di-trans,poly-cis-dolichyl phosphate + phosphate + H(+). It functions in the pathway protein modification; protein glycosylation. Its function is as follows. Required for efficient N-glycosylation. Necessary for maintaining optimal levels of dolichol-linked oligosaccharides. Hydrolyzes dolichyl pyrophosphate at a very high rate and dolichyl monophosphate at a much lower rate. Does not act on phosphatidate. The chain is Dolichyldiphosphatase 1 (DOLPP1) from Homo sapiens (Human).